A 443-amino-acid polypeptide reads, in one-letter code: Diels-Alderase poxQ (443 aa).

Residues 1-23 (MARIPLEFLSITLPVLLLAYCLA) form the signal peptide. N78, N97, and N145 each carry an N-linked (GlcNAc...) asparagine glycan.

Belongs to the Diels-Alderase family.

It functions in the pathway secondary metabolite biosynthesis. In terms of biological role, diels-Alderase; part of the gene cluster that mediates the biosynthesis of oxaleimides, cytotoxic compounds containing an unusual disubstituted succinimide moiety. The first step of the pathway is provided by the HR-PKS poxF that serves in a new mode of collaborative biosynthesis with the PKS-NRPS poxE, by providing the olefin containing amino acid substrate via the synthesis of an ACP-bound dec-4-enoate. The cytochrome P450 monooxygenase poxM-catalyzed oxidation at the alpha-position creates the enzyme-bound 2-hydroxydec-4-enoyl-ACP thioester, which may be prone to spontaneous hydrolysis to yield 2-hydroxydec-4-enoic acid due to increased electrophilicity of the carbonyl. 2-hydroxydec-4-enoic acid can then be further oxidized by poxM to yield the alpha-ketoacid 2-oxodec-4-enoicacid, which is reductively aminated by the aminotransferase poxL to yield (S,E)-2-aminodec-4-enoic acid. The Hybrid PKS-NRPS synthetase poxE then performs condensation between the octaketide product of its PKS modules and the amino group of (S,E)-2-aminodec-4-enoic acid which is activated and incorporated by the adenylation domain. The resulting aminoacyl product can be cyclized by the Diels-Alderase PoxQ and reductively released by the reductive (R) domain of poxE to yield an aldehyde intermediate. The released aldehyde is then substrate for a Knoevenagel condensation by the hydrolyase poxO followed by an oxidation at the 5-position of the pyrrolidone ring. The presence of the olefin from the amino acid building block allows for migration of the substituted allyl group to occur. This allylic transposition reaction takes place in a conjugate addition, semipinacol-like fashion to yield a succinimide intermediate. Iterative two-electron oxidations of the C7 methyl of the succinimide intermediate to the carboxylic acid can be catalyzed by one of two remaining cytochrome P450 monooxygenasess poxC or poxD to yield oxaleimide A. Subsequent oxidation yields the maleimide scaffold oxaleimide I. Both oxaleimide A and oxaleimide I can undergo oxidative modifications in the decalin ring to yield the series of products oxaleimides B to H. This is Diels-Alderase poxQ from Penicillium oxalicum (strain 114-2 / CGMCC 5302) (Penicillium decumbens).